A 451-amino-acid chain; its full sequence is MFLGEDYLLTNRAAVRLFNEVKDLPIVDPHNHLDAKDIVENKPWNDIWEVEGATDHYVWELMRRCGVSEEYITGSRSNKEKWLALAKVFPRFVGNPTYEWIHLDLWRRFNIKKVISEETAEEIWEETKKKLPEMTPQKLLRDMKVEILCTTDDPVSTLEHHRKAKEAVEGVTILPTWRPDRAMNVDKEGWREYVEKMGERYGEDTSTLDGFLNALWKSHEHFKEHGCVASDHALLEPSVYYVDENRARAVHEKAFSGEKLTQDEINDYKAFMMVQFGKMNQETNWVTQLHIGALRDYRDSLFKTLGPDSGGDISTNFLRIAEGLRYFLNEFDGKLKIVLYVLDPTHLPTISTIARAFPNVYVGAPWWFNDSPFGMEMHLKYLASVDLLYNLAGMVTDSRKLLSFGSRTEMFRRVLSNVVGEMVEKGQIPIKEARELVKHVSYDGPKALFFG.

It belongs to the metallo-dependent hydrolases superfamily. Uronate isomerase family. In terms of assembly, homotrimer.

The enzyme catalyses D-glucuronate = D-fructuronate. The catalysed reaction is aldehydo-D-galacturonate = keto-D-tagaturonate. The protein operates within carbohydrate metabolism; pentose and glucuronate interconversion. This Thermotoga maritima (strain ATCC 43589 / DSM 3109 / JCM 10099 / NBRC 100826 / MSB8) protein is Uronate isomerase.